The following is a 342-amino-acid chain: Forkhead box protein D5-C (342 aa).

The tract at residues 1-89 (MNLSQDSSAH…KHSLDTTTNG (89 aa)) is disordered. Acidic residues predominate over residues 20 to 34 (SDDEDEIDILGEDDP). A compositionally biased stretch (polar residues) spans 59-70 (SKLSCNESASHS). Over residues 71 to 83 (SGERERGTSKHSL) the composition is skewed to basic and acidic residues. The segment at residues 97 to 191 (KPPYSYIALI…DNGSFLRRRK (95 aa)) is a DNA-binding region (fork-head).

At the onset of gastrulation, expressed in the superficial layer of cells in the dorsal blastopore lip (Spemann organizer). In the open neural plate, expressed in a row of cells destined to become the floor plate of the neural tube. After neural tube closure, only detected in the tailtip and a small area located at the midbrain/hindbrain boundary.

Its subcellular location is the nucleus. Functionally, transcriptional repressor. The chain is Forkhead box protein D5-C (foxd5-c) from Xenopus laevis (African clawed frog).